The primary structure comprises 369 residues: Histidinol-phosphate aminotransferase (369 aa).

Lysine 223 carries the N6-(pyridoxal phosphate)lysine modification.

Belongs to the class-II pyridoxal-phosphate-dependent aminotransferase family. Histidinol-phosphate aminotransferase subfamily. In terms of assembly, homodimer. Requires pyridoxal 5'-phosphate as cofactor.

It catalyses the reaction L-histidinol phosphate + 2-oxoglutarate = 3-(imidazol-4-yl)-2-oxopropyl phosphate + L-glutamate. The protein operates within amino-acid biosynthesis; L-histidine biosynthesis; L-histidine from 5-phospho-alpha-D-ribose 1-diphosphate: step 7/9. This chain is Histidinol-phosphate aminotransferase, found in Shouchella clausii (strain KSM-K16) (Alkalihalobacillus clausii).